The following is a 179-amino-acid chain: ATP synthase subunit b (179 aa).

A helical membrane pass occupies residues 27-47; the sequence is TAITFLVMLAVLAKFAWGPIV.

The protein belongs to the ATPase B chain family. In terms of assembly, F-type ATPases have 2 components, F(1) - the catalytic core - and F(0) - the membrane proton channel. F(1) has five subunits: alpha(3), beta(3), gamma(1), delta(1), epsilon(1). F(0) has three main subunits: a(1), b(2) and c(10-14). The alpha and beta chains form an alternating ring which encloses part of the gamma chain. F(1) is attached to F(0) by a central stalk formed by the gamma and epsilon chains, while a peripheral stalk is formed by the delta and b chains.

Its subcellular location is the cell inner membrane. Functionally, f(1)F(0) ATP synthase produces ATP from ADP in the presence of a proton or sodium gradient. F-type ATPases consist of two structural domains, F(1) containing the extramembraneous catalytic core and F(0) containing the membrane proton channel, linked together by a central stalk and a peripheral stalk. During catalysis, ATP synthesis in the catalytic domain of F(1) is coupled via a rotary mechanism of the central stalk subunits to proton translocation. In terms of biological role, component of the F(0) channel, it forms part of the peripheral stalk, linking F(1) to F(0). The sequence is that of ATP synthase subunit b from Anaeromyxobacter dehalogenans (strain 2CP-C).